A 376-amino-acid chain; its full sequence is N-acetyldiaminopimelate deacetylase (376 aa).

D69 is a catalytic residue. E128 functions as the Proton acceptor in the catalytic mechanism.

This sequence belongs to the peptidase M20A family. N-acetyldiaminopimelate deacetylase subfamily.

The catalysed reaction is N-acetyl-(2S,6S)-2,6-diaminopimelate + H2O = (2S,6S)-2,6-diaminopimelate + acetate. The protein operates within amino-acid biosynthesis; L-lysine biosynthesis via DAP pathway; LL-2,6-diaminopimelate from (S)-tetrahydrodipicolinate (acetylase route): step 3/3. Catalyzes the conversion of N-acetyl-diaminopimelate to diaminopimelate and acetate. This chain is N-acetyldiaminopimelate deacetylase, found in Bacillus mycoides (strain KBAB4) (Bacillus weihenstephanensis).